We begin with the raw amino-acid sequence, 1205 residues long: U2 snRNP component prp10 (1205 aa).

3 disordered regions span residues 39–58 (QKEA…EGTQ), 122–175 (YADE…GRSY), and 202–254 (GTLK…RRSR). Polar residues predominate over residues 44 to 58 (KNSSTNGSVNIEGTQ). Residues 130 to 153 (MQERQSKKQIQDRESDYQKQRYDR) show a composition bias toward basic and acidic residues. HEAT repeat units follow at residues 393-429 (LRER…DFGA), 431-473 (ALFN…PFTH), 475-505 (ILVV…AKAS), 506-540 (GLAH…ASAL), 541-578 (GVPA…LLGC), 582-619 (PHLK…AATP), 665-702 (HFTR…TDGV), 745-782 (VGSR…SLGV), 828-865 (PYLP…VLKA), 912-949 (PPIR…RGSE), 954-991 (REWM…AIGP), 993-1024 (DVLA…AETC), 1025-1061 (MPFT…YIGE), 1065-1102 (DYVY…GCVG), 1107-1142 (DAMI…RNCI), and 1143-1179 (GVGP…QSAD).

It belongs to the SF3B1 family. In terms of assembly, belongs to the 40S cdc5-associated complex (or cwf complex), a spliceosome sub-complex reminiscent of a late-stage spliceosome composed of the U2, U5 and U6 snRNAs and at least brr2, cdc5, cwf2/prp3, cwf3/syf1, cwf4/syf3, cwf5/ecm2, spp42/cwf6, cwf7/spf27, cwf8, cwf9, cwf10, cwf11, cwf12, prp45/cwf13, cwf14, cwf15, cwf16, cwf17, cwf18, cwf19, cwf20, cwf21, cwf22, cwf23, cwf24, cwf25, cwf26, cyp7/cwf27, cwf28, cwf29/ist3, lea1, msl1, prp5/cwf1, prp10, prp12/sap130, prp17, prp22, sap61, sap62, sap114, sap145, slu7, smb1, smd1, smd3, smf1, smg1 and syf2.

Its subcellular location is the nucleus. Functionally, contacts pre-mRNA on both sides of the branch site early in spliceosome assembly. This chain is U2 snRNP component prp10 (prp10), found in Schizosaccharomyces pombe (strain 972 / ATCC 24843) (Fission yeast).